We begin with the raw amino-acid sequence, 588 residues long: Phenol 2-monooxygenase fsqG (588 aa).

Residues 9-38 (DVLIIGAGPAGLTTANSFNGSNCRVRLIDW), 17-18 (PA), 37-39 (DWK), 45-50 (TGRADG), Y232, 289-299 (ARHNRIFLAGD), D299, and 309-313 (GQGMN) each bind FAD. 2 residues coordinate substrate: D49 and Y232.

The protein belongs to the PheA/TfdB FAD monooxygenase family. Homodimer. Requires FAD as cofactor.

Its pathway is secondary metabolite biosynthesis. Phenol 2-monooxygenase; part of the gene cluster that mediates the biosynthesis of the isoquinoline alkaloids fumisoquin A, fumisoquin B and fumisoquin C; as well as small amounts of fumipyrrole as a shunt metabolite. The products of the cluster lead to a brown coloration and are important for growth and conidiation. The nonribosomal peptide synthetase-like protein fsqF, which lacks a canonical condensation domain, is required for addition of a serine-derived dehydroalanine moiety to activated tyrosine but is not essential for the subsequent steps leading to isoquinoline formation. A different enzyme, most likely the ATP-grasp enzyme fsqD, is responsible for activation of tyrosine. Three additional enzymes encoded by the fsq cluster, the N-methyltransferase fsqC, the phenol 2-monooxygenase fsqG and the FAD-dependent oxidase fsqB, catalyze the formation of the isoquinoline ring system in the fumisoquins. FsqB converts the fspF thiolation domain-bound (2S,4S,5S)-2-amino-6-(3,4-dihydroxyphenyl)-4-hydroxy-5-(methylamino)hexanoyl into isoquinoline. The cyclization most likely proceeds via a two-step mechanism, beginning with FAD-dependent oxidation of the methyl group to an iminium species followed by electrophilic attack on the deprotonated phenol. This chain is Phenol 2-monooxygenase fsqG, found in Aspergillus fumigatus (strain ATCC MYA-4609 / CBS 101355 / FGSC A1100 / Af293) (Neosartorya fumigata).